The chain runs to 250 residues: Coproheme decarboxylase (250 aa).

Residues R131, Y145 to K149, H172, and Q185 each bind Fe-coproporphyrin III. Y145 is a catalytic residue.

The protein belongs to the ChdC family. Type 1 subfamily. Fe-coproporphyrin III is required as a cofactor.

The enzyme catalyses Fe-coproporphyrin III + 2 H2O2 + 2 H(+) = heme b + 2 CO2 + 4 H2O. The catalysed reaction is Fe-coproporphyrin III + H2O2 + H(+) = harderoheme III + CO2 + 2 H2O. It carries out the reaction harderoheme III + H2O2 + H(+) = heme b + CO2 + 2 H2O. It functions in the pathway porphyrin-containing compound metabolism; protoheme biosynthesis. Its function is as follows. Involved in coproporphyrin-dependent heme b biosynthesis. Catalyzes the decarboxylation of Fe-coproporphyrin III (coproheme) to heme b (protoheme IX), the last step of the pathway. The reaction occurs in a stepwise manner with a three-propionate intermediate. This chain is Coproheme decarboxylase, found in Staphylococcus aureus (strain USA300 / TCH1516).